Reading from the N-terminus, the 131-residue chain is UPF0102 protein YraN (131 aa).

Belongs to the UPF0102 family.

This Salmonella arizonae (strain ATCC BAA-731 / CDC346-86 / RSK2980) protein is UPF0102 protein YraN.